We begin with the raw amino-acid sequence, 678 residues long: Glycine--tRNA ligase beta subunit (678 aa).

The protein belongs to the class-II aminoacyl-tRNA synthetase family. As to quaternary structure, tetramer of two alpha and two beta subunits.

The protein localises to the cytoplasm. The enzyme catalyses tRNA(Gly) + glycine + ATP = glycyl-tRNA(Gly) + AMP + diphosphate. This is Glycine--tRNA ligase beta subunit from Streptococcus pneumoniae serotype 19F (strain G54).